The primary structure comprises 561 residues: Putative transport protein Ent638_1362 (561 aa).

Transmembrane regions (helical) follow at residues 8–28, 32–52, 66–86, 94–114, and 158–178; these read LLNGNYILLLFVVLALGLCLG, LGSVQLGNSIGVLVVSLLLGQ, FMLFIFCVGVEAGPNFFSIFF, MLALVMVGSALIIALGLGKLF, and HLSLGYALTYLIGLVSLIVAA. RCK C-terminal domains follow at residues 202–288 and 292–373; these read LDTD…SFRN and VFDR…RIGF. Transmembrane regions (helical) follow at residues 383 to 403, 406 to 426, 447 to 467, 475 to 495, and 540 to 560; these read LLAFCAFFIVGLMIGMITFQF, FSFGVGNAAGLLFAGIMLGFL, FGLMVFMAGVGLSAGSGIGHS, MLVAGLIVSLLPVVICFLFGA, and AIANVLLTLAGTLIIIIWPGL.

Belongs to the AAE transporter (TC 2.A.81) family. YbjL subfamily.

The protein localises to the cell membrane. The sequence is that of Putative transport protein Ent638_1362 from Enterobacter sp. (strain 638).